A 550-amino-acid chain; its full sequence is Glucose-6-phosphate isomerase (550 aa).

D-glucose 6-phosphate is bound by residues 163–164, 214–219, Q358, E362, H393, and K515; these read GS and SKTFTT. The Proton donor role is filled by E362. Active-site residues include H393 and K515.

This sequence belongs to the GPI family. In terms of assembly, homodimer.

It is found in the cytoplasm. It carries out the reaction alpha-D-glucose 6-phosphate = beta-D-fructose 6-phosphate. It functions in the pathway carbohydrate degradation; glycolysis; D-glyceraldehyde 3-phosphate and glycerone phosphate from D-glucose: step 2/4. Its function is as follows. In the cytoplasm, catalyzes the conversion of glucose-6-phosphate to fructose-6-phosphate, the second step in glycolysis, and the reverse reaction during gluconeogenesis. In Candida albicans (strain SC5314 / ATCC MYA-2876) (Yeast), this protein is Glucose-6-phosphate isomerase (PGI1).